Consider the following 168-residue polypeptide: Lipoprotein signal peptidase (168 aa).

3 consecutive transmembrane segments (helical) span residues 8 to 28, 70 to 90, and 104 to 124; these read TLLVITLFVLIDWVTKLVVLL, KYFLFLLRIFVILGLLAYLFF, and VLLCAGAIGNVGDIIFYGHIV. Residues Asp-125 and Asp-143 contribute to the active site. The chain crosses the membrane as a helical span at residues 134-154; the sequence is WAFPTFNVADVLISLGTLLLV.

The protein belongs to the peptidase A8 family.

Its subcellular location is the cell inner membrane. It catalyses the reaction Release of signal peptides from bacterial membrane prolipoproteins. Hydrolyzes -Xaa-Yaa-Zaa-|-(S,diacylglyceryl)Cys-, in which Xaa is hydrophobic (preferably Leu), and Yaa (Ala or Ser) and Zaa (Gly or Ala) have small, neutral side chains.. It functions in the pathway protein modification; lipoprotein biosynthesis (signal peptide cleavage). Functionally, this protein specifically catalyzes the removal of signal peptides from prolipoproteins. The polypeptide is Lipoprotein signal peptidase (Chlamydia pneumoniae (Chlamydophila pneumoniae)).